Reading from the N-terminus, the 277-residue chain is Indole-3-glycerol phosphate synthase (277 aa).

The protein belongs to the TrpC family.

It carries out the reaction 1-(2-carboxyphenylamino)-1-deoxy-D-ribulose 5-phosphate + H(+) = (1S,2R)-1-C-(indol-3-yl)glycerol 3-phosphate + CO2 + H2O. It participates in amino-acid biosynthesis; L-tryptophan biosynthesis; L-tryptophan from chorismate: step 4/5. This is Indole-3-glycerol phosphate synthase from Pseudomonas putida (strain W619).